The chain runs to 340 residues: Immunoglobulin-binding protein 1 (340 aa).

Residues 47–61 (LELLEKAAGMLSQLD) enclose the UIM domain. An interaction with PPP2CA region spans residues 99–203 (RLDHLQRARE…YLLHLRRWIG (105 aa)). 2 disordered regions span residues 221–242 (DKDS…PPMK) and 281–340 (LPDR…QNMG). The interaction with MID1 stretch occupies residues 226 to 291 (REESACQSSL…PDRGIAKPPS (66 aa)). Position 242 is an N6-acetyllysine (K242). Residues 292-301 (ADFQRAAQQQ) are compositionally biased toward low complexity. The span at 302–312 (EDQEQKDEENE) shows a compositional bias: acidic residues. The segment covering 313–330 (EKALHRMREWDDWKDTHP) has biased composition (basic and acidic residues).

This sequence belongs to the IGBP1/TAP42 family. As to quaternary structure, interacts with partially folded PPP2CA, but not with the fully active protein. Interacts with PPP2CB, and with PP4 and PP6. Interacts with MID1 and MID2. Interacts with ubiquitin. Phosphorylated. In terms of processing, monoubiquitination by MID1 triggers calpain-mediated cleavage and switches IGBP1 activity from protective to destructive.

Its subcellular location is the cytoplasm. In terms of biological role, associated to surface IgM-receptor; may be involved in signal transduction. Involved in regulation of the catalytic activity of the phosphatases PP2A, PP4 and PP6 by protecting their partially folded catalytic subunits from degradative polyubiquitination until they associate with regulatory subunits. This Rattus norvegicus (Rat) protein is Immunoglobulin-binding protein 1 (Igbp1).